The chain runs to 792 residues: Phenylalanine--tRNA ligase beta subunit (792 aa).

The region spanning 39-147 (GEALDLILVA…EDAPIGTPLA (109 aa)) is the tRNA-binding domain. The region spanning 400–475 (PAPASILLRR…RIRGYEHLPT (76 aa)) is the B5 domain. The Mg(2+) site is built by Asp-453, Asp-459, Glu-462, and Glu-463. The FDX-ACB domain maps to 698 to 791 (SRFPFVRRDL…IQQRHDVRIR (94 aa)).

Belongs to the phenylalanyl-tRNA synthetase beta subunit family. Type 1 subfamily. Tetramer of two alpha and two beta subunits. It depends on Mg(2+) as a cofactor.

It is found in the cytoplasm. The enzyme catalyses tRNA(Phe) + L-phenylalanine + ATP = L-phenylalanyl-tRNA(Phe) + AMP + diphosphate + H(+). The sequence is that of Phenylalanine--tRNA ligase beta subunit from Xylella fastidiosa (strain Temecula1 / ATCC 700964).